The following is a 218-amino-acid chain: Capsid protein (218 aa).

Residues 1–25 (MSSSQKKAGGKAGKPTKRSQNYAAL) form a disordered region. Position 2 is an N-acetylserine; by host (serine 2).

The protein belongs to the alphamovirus/ilarvirus capsid protein family.

It localises to the virion. In terms of biological role, capsid protein. Binds to the to the 3' end of the nonpolyadenylated viral RNA and is involved in viral RNA translation initiation. Probably binds RNA and plays a role in packaging. In Alfalfa mosaic virus (strain Strasbourg), this protein is Capsid protein.